The sequence spans 298 residues: Glutamyl-Q tRNA(Asp) synthetase (298 aa).

Residues 9 to 13 and Glu45 contribute to the L-glutamate site; that span reads RFAPS. The 'HIGH' region signature appears at 12–22; it reads PSPSGELHFGS. Cys101, Cys103, Tyr115, and Cys119 together coordinate Zn(2+). Tyr172 and Arg190 together coordinate L-glutamate. The short motif at 228-232 is the 'KMSKS' region element; sequence KLSKQ. Lys231 contributes to the ATP binding site.

The protein belongs to the class-I aminoacyl-tRNA synthetase family. GluQ subfamily. Zn(2+) serves as cofactor.

In terms of biological role, catalyzes the tRNA-independent activation of glutamate in presence of ATP and the subsequent transfer of glutamate onto a tRNA(Asp). Glutamate is transferred on the 2-amino-5-(4,5-dihydroxy-2-cyclopenten-1-yl) moiety of the queuosine in the wobble position of the QUC anticodon. The chain is Glutamyl-Q tRNA(Asp) synthetase from Salmonella paratyphi A (strain ATCC 9150 / SARB42).